The sequence spans 252 residues: Transcriptional regulatory protein HptR (252 aa).

Residues 3 to 118 (KVVICDDERI…QLEVILGRLV (116 aa)) form the Response regulatory domain. 4-aspartylphosphate is present on Asp-55. Positions 153–250 (NQIVDQIKQS…QMSPSDYCKQ (98 aa)) constitute an HTH araC/xylS-type domain. 2 DNA-binding regions (H-T-H motif) span residues 170–191 (SDLI…KDHV) and 217–240 (HYEI…KKYL).

Phosphorylated by HptS.

It localises to the cytoplasm. In terms of biological role, member of the two-component regulatory system HptS/HptR that regulates genes involved in hexose phosphate transport system in response to changes in extracellular phosphate sources. Activates uhpT expression to facilitate glucose-6-phosphate/G6P utilization by directly binding to its promoter. Antagonizes CcpA-dependent transcription of a subset of CcpA-regulated genes involved in antibiotic susceptibility. The sequence is that of Transcriptional regulatory protein HptR (hptR) from Staphylococcus aureus (strain MRSA252).